Here is a 76-residue protein sequence, read N- to C-terminus: Conotoxin TxMEKL-011 (76 aa).

Positions 1-19 (MEKLTILLLVAAVLMSTQA) are cleaved as a signal peptide. The propeptide occupies 20-45 (LVERAGENRSKENIKFLLKRKRAADR). Disulfide bonds link Cys51/Cys65, Cys58/Cys69, and Cys64/Cys73.

Belongs to the conotoxin O2 superfamily. Expressed by the venom duct.

It localises to the secreted. The chain is Conotoxin TxMEKL-011 from Conus textile (Cloth-of-gold cone).